We begin with the raw amino-acid sequence, 60 residues long: Conotoxin Cal6.20 (60 aa).

The N-terminal stretch at 1-22 (MKLTCVLIVAVLILTACQVIAA) is a signal peptide. Intrachain disulfides connect C32-C42, C35-C48, and C41-C55.

Belongs to the conotoxin O1 superfamily. As to expression, expressed by the venom duct.

The protein localises to the secreted. Functionally, probable neurotoxin. The sequence is that of Conotoxin Cal6.20 from Californiconus californicus (California cone).